Reading from the N-terminus, the 104-residue chain is DNA-directed RNA polymerase subunit omega (104 aa).

Residues 60 to 104 (VIHPDPEGKREAVRRRAEEERLRKEEEERKIKEQIAKEKEEGEKI) are disordered. Residues 63–104 (PDPEGKREAVRRRAEEERLRKEEEERKIKEQIAKEKEEGEKI) are compositionally biased toward basic and acidic residues.

It belongs to the RNA polymerase subunit omega family. In terms of assembly, the RNAP catalytic core consists of 2 alpha, 1 beta, 1 beta' and 1 omega subunit. When a sigma factor is associated with the core the holoenzyme is formed, which can initiate transcription.

The enzyme catalyses RNA(n) + a ribonucleoside 5'-triphosphate = RNA(n+1) + diphosphate. Functionally, promotes RNA polymerase assembly. Latches the N- and C-terminal regions of the beta' subunit thereby facilitating its interaction with the beta and alpha subunits. In Streptococcus sanguinis (strain SK36), this protein is DNA-directed RNA polymerase subunit omega.